Reading from the N-terminus, the 95-residue chain is Aspartyl/glutamyl-tRNA(Asn/Gln) amidotransferase subunit C (95 aa).

Belongs to the GatC family. In terms of assembly, heterotrimer of A, B and C subunits.

The catalysed reaction is L-glutamyl-tRNA(Gln) + L-glutamine + ATP + H2O = L-glutaminyl-tRNA(Gln) + L-glutamate + ADP + phosphate + H(+). It catalyses the reaction L-aspartyl-tRNA(Asn) + L-glutamine + ATP + H2O = L-asparaginyl-tRNA(Asn) + L-glutamate + ADP + phosphate + 2 H(+). Allows the formation of correctly charged Asn-tRNA(Asn) or Gln-tRNA(Gln) through the transamidation of misacylated Asp-tRNA(Asn) or Glu-tRNA(Gln) in organisms which lack either or both of asparaginyl-tRNA or glutaminyl-tRNA synthetases. The reaction takes place in the presence of glutamine and ATP through an activated phospho-Asp-tRNA(Asn) or phospho-Glu-tRNA(Gln). This Rhizorhabdus wittichii (strain DSM 6014 / CCUG 31198 / JCM 15750 / NBRC 105917 / EY 4224 / RW1) (Sphingomonas wittichii) protein is Aspartyl/glutamyl-tRNA(Asn/Gln) amidotransferase subunit C.